A 109-amino-acid polypeptide reads, in one-letter code: uncharacterized protein (109 aa).

Residues 67-96 (YFGNKLWRPTPRSGQSGQSRPKTGPHGSQR) are disordered. A compositionally biased stretch (polar residues) spans 78–87 (RSGQSGQSRP).

This is an uncharacterized protein from Saccharomyces cerevisiae (strain ATCC 204508 / S288c) (Baker's yeast).